The chain runs to 260 residues: Fibronectin type III domain-containing protein 5 (260 aa).

The tract at residues 1 to 56 is disordered; that stretch reads MQAARGGAGRPERPGRPGRGPERERERPPGAGAASPCAAPGLPAGGATIHPGSPSA. Residues 10 to 28 are compositionally biased toward basic and acidic residues; the sequence is RPERPGRPGRGPERERERP. Over residues 29–56 the composition is skewed to low complexity; sequence PGAGAASPCAAPGLPAGGATIHPGSPSA. Positions 84 to 175 constitute a Fibronectin type-III domain; that stretch reads APVNVTVRHL…EPVLFKTPRE (92 aa). 2 N-linked (GlcNAc...) asparagine glycosylation sites follow: N87 and N132. The helical transmembrane segment at 201-221 threads the bilayer; it reads GEVLIIVVVLFMWAGVIALFC. Positions 230-241 are enriched in basic and acidic residues; that stretch reads NEPNNNKEKTKS. Residues 230 to 260 are disordered; the sequence is NEPNNNKEKTKSASETSTPEHQGGGLLRSKI. Positions 251–260 are enriched in gly residues; the sequence is QGGGLLRSKI. The Microbody targeting signal motif lies at 258–260; sequence SKI.

Dimer; may exist in other oligomeric forms. The extracellular domain is cleaved and released from the cell membrane. In terms of processing, N-Glycosylated. As to expression, widely expressed, with highest levels in heart. Very low expression, if any, in colon, pancreas and spleen.

It localises to the cell membrane. The protein resides in the peroxisome membrane. The protein localises to the secreted. Functionally, mediates beneficial effects of muscular exercise. Induces browning of white adipose tissue by stimulating UCP1 expression, at least in part, via the nuclear receptor PPARA. In Homo sapiens (Human), this protein is Fibronectin type III domain-containing protein 5 (FNDC5).